Here is a 61-residue protein sequence, read N- to C-terminus: Putative defensin-like protein 72 (61 aa).

Disulfide bonds link Cys21-Cys59, Cys25-Cys48, Cys34-Cys57, and Cys38-Cys58.

The protein belongs to the DEFL family.

In Arabidopsis thaliana (Mouse-ear cress), this protein is Putative defensin-like protein 72.